A 602-amino-acid polypeptide reads, in one-letter code: Glutamyl-tRNA(Gln) amidotransferase subunit B, mitochondrial (602 aa).

A mitochondrion-targeting transit peptide spans 1–56 (MFRSCLRHCRRATVRSRTCPRCSHHEIPQLQVVQRQISLSSSFPHIRRLQTSSTDT).

Belongs to the GatB/GatE family. GatB subfamily. Subunit of the heterotrimeric GatCAB amidotransferase (AdT) complex, composed of A, B and C subunits.

The protein resides in the mitochondrion. The catalysed reaction is L-glutamyl-tRNA(Gln) + L-glutamine + ATP + H2O = L-glutaminyl-tRNA(Gln) + L-glutamate + ADP + phosphate + H(+). Functionally, allows the formation of correctly charged Gln-tRNA(Gln) through the transamidation of misacylated Glu-tRNA(Gln) in the mitochondria. The reaction takes place in the presence of glutamine and ATP through an activated gamma-phospho-Glu-tRNA(Gln). The chain is Glutamyl-tRNA(Gln) amidotransferase subunit B, mitochondrial (nempA) from Emericella nidulans (strain FGSC A4 / ATCC 38163 / CBS 112.46 / NRRL 194 / M139) (Aspergillus nidulans).